A 565-amino-acid chain; its full sequence is Urocanate hydratase (565 aa).

NAD(+) contacts are provided by residues 61 to 62 (GG), Gln139, 185 to 187 (GMG), Glu205, Arg210, 251 to 252 (NA), 272 to 276 (QTSAH), 282 to 283 (YL), and Tyr331. Cys419 is an active-site residue. A disordered region spans residues 453–472 (LDSGSVASPNRETESMRDGS). Residues 463-472 (RETESMRDGS) are compositionally biased toward basic and acidic residues. Gly501 lines the NAD(+) pocket.

Belongs to the urocanase family. Requires NAD(+) as cofactor.

It is found in the cytoplasm. It catalyses the reaction 4-imidazolone-5-propanoate = trans-urocanate + H2O. It participates in amino-acid degradation; L-histidine degradation into L-glutamate; N-formimidoyl-L-glutamate from L-histidine: step 2/3. Its function is as follows. Catalyzes the conversion of urocanate to 4-imidazolone-5-propionate. The polypeptide is Urocanate hydratase (Pseudomonas savastanoi pv. phaseolicola (strain 1448A / Race 6) (Pseudomonas syringae pv. phaseolicola (strain 1448A / Race 6))).